The following is a 252-amino-acid chain: ATP synthase subunit a (252 aa).

6 consecutive transmembrane segments (helical) span residues 29–49, 87–107, 116–136, 146–166, 183–205, and 219–239; these read FTNV…FLFI, FFPL…IGLF, QIMI…GYGF, LFVP…IEVI, MLAG…ELGI, and VAIT…FTVL.

The protein belongs to the ATPase A chain family. In terms of assembly, F-type ATPases have 2 components, CF(1) - the catalytic core - and CF(0) - the membrane proton channel. CF(1) has five subunits: alpha(3), beta(3), gamma(1), delta(1), epsilon(1). CF(0) has three main subunits: a(1), b(2) and c(9-12). The alpha and beta chains form an alternating ring which encloses part of the gamma chain. CF(1) is attached to CF(0) by a central stalk formed by the gamma and epsilon chains, while a peripheral stalk is formed by the delta and b chains.

The protein localises to the cell inner membrane. Key component of the proton channel; it plays a direct role in the translocation of protons across the membrane. This is ATP synthase subunit a from Bartonella quintana (strain Toulouse) (Rochalimaea quintana).